The following is a 211-amino-acid chain: Phosphoheptose isomerase (211 aa).

One can recognise an SIS domain in the interval 50–211 (IAGTFEDGGK…VERMLGYCRL (162 aa)). 65–67 (NGG) serves as a coordination point for substrate. Zn(2+)-binding residues include His-74 and Glu-78. Substrate-binding positions include Glu-78, 109 to 110 (ND), 135 to 137 (STS), Ser-140, and Gln-188. Residues Gln-188 and His-196 each contribute to the Zn(2+) site.

It belongs to the SIS family. GmhA subfamily. The cofactor is Zn(2+).

The protein localises to the cytoplasm. The catalysed reaction is 2 D-sedoheptulose 7-phosphate = D-glycero-alpha-D-manno-heptose 7-phosphate + D-glycero-beta-D-manno-heptose 7-phosphate. The protein operates within carbohydrate biosynthesis; D-glycero-D-manno-heptose 7-phosphate biosynthesis; D-glycero-alpha-D-manno-heptose 7-phosphate and D-glycero-beta-D-manno-heptose 7-phosphate from sedoheptulose 7-phosphate: step 1/1. Functionally, catalyzes the isomerization of sedoheptulose 7-phosphate in D-glycero-D-manno-heptose 7-phosphate. The chain is Phosphoheptose isomerase from Pelodictyon phaeoclathratiforme (strain DSM 5477 / BU-1).